The following is a 198-amino-acid chain: NAD(P)H dehydrogenase (quinone) (198 aa).

The region spanning 4–189 (ILVLYYSMYG…SIARYQGEYV (186 aa)) is the Flavodoxin-like domain. FMN is bound by residues 10 to 15 (SMYGHI) and 78 to 80 (TRF). Tyr-12 contributes to the NAD(+) binding site. Trp-98 contacts substrate. FMN is bound by residues 113–118 (STGTGG) and His-133.

This sequence belongs to the WrbA family. FMN serves as cofactor.

The enzyme catalyses a quinone + NADH + H(+) = a quinol + NAD(+). The catalysed reaction is a quinone + NADPH + H(+) = a quinol + NADP(+). The chain is NAD(P)H dehydrogenase (quinone) from Salmonella paratyphi C (strain RKS4594).